We begin with the raw amino-acid sequence, 221 residues long: ATP phosphoribosyltransferase (221 aa).

Belongs to the ATP phosphoribosyltransferase family. Short subfamily. Heteromultimer composed of HisG and HisZ subunits.

It is found in the cytoplasm. It catalyses the reaction 1-(5-phospho-beta-D-ribosyl)-ATP + diphosphate = 5-phospho-alpha-D-ribose 1-diphosphate + ATP. Its pathway is amino-acid biosynthesis; L-histidine biosynthesis; L-histidine from 5-phospho-alpha-D-ribose 1-diphosphate: step 1/9. Catalyzes the condensation of ATP and 5-phosphoribose 1-diphosphate to form N'-(5'-phosphoribosyl)-ATP (PR-ATP). Has a crucial role in the pathway because the rate of histidine biosynthesis seems to be controlled primarily by regulation of HisG enzymatic activity. This chain is ATP phosphoribosyltransferase, found in Neisseria gonorrhoeae (strain ATCC 700825 / FA 1090).